A 138-amino-acid chain; its full sequence is Ribulose bisphosphate carboxylase small subunit (138 aa).

It belongs to the RuBisCO small chain family. Heterohexadecamer of 8 large and 8 small subunits.

The protein localises to the plastid. Its subcellular location is the chloroplast. Functionally, ruBisCO catalyzes two reactions: the carboxylation of D-ribulose 1,5-bisphosphate, the primary event in carbon dioxide fixation, as well as the oxidative fragmentation of the pentose substrate in the photorespiration process. Both reactions occur simultaneously and in competition at the same active site. Although the small subunit is not catalytic it is essential for maximal activity. The protein is Ribulose bisphosphate carboxylase small subunit of Pyropia yezoensis (Susabi-nori).